The sequence spans 161 residues: Peroxynitrite isomerase 1 (161 aa).

Positions 17–23 (GTWTGRG) match the GXWXGXG motif. Histidine 152 provides a ligand contact to heme b.

This sequence belongs to the nitrobindin family. In terms of assembly, homodimer. Requires heme b as cofactor.

It carries out the reaction peroxynitrite = nitrate. The protein operates within nitrogen metabolism. Heme-binding protein able to scavenge peroxynitrite and to protect free L-tyrosine against peroxynitrite-mediated nitration, by acting as a peroxynitrite isomerase that converts peroxynitrite to nitrate. Therefore, this protein likely plays a role in peroxynitrite sensing and in the detoxification of reactive nitrogen and oxygen species (RNS and ROS, respectively). Is able to bind nitric oxide (NO) in vitro, but may act as a sensor of peroxynitrite levels in vivo. In Mycolicibacterium paratuberculosis (strain ATCC BAA-968 / K-10) (Mycobacterium paratuberculosis), this protein is Peroxynitrite isomerase 1.